We begin with the raw amino-acid sequence, 488 residues long: Pup--protein ligase (488 aa).

Glu-34 is a Mg(2+) binding site. Residue Arg-77 coordinates ATP. Tyr-79 contributes to the Mg(2+) binding site. Catalysis depends on Asp-81, which acts as the Proton acceptor. Glu-87 contacts Mg(2+). Positions 90 and 453 each coordinate ATP.

This sequence belongs to the Pup ligase/Pup deamidase family. Pup-conjugating enzyme subfamily.

It catalyses the reaction ATP + [prokaryotic ubiquitin-like protein]-L-glutamate + [protein]-L-lysine = ADP + phosphate + N(6)-([prokaryotic ubiquitin-like protein]-gamma-L-glutamyl)-[protein]-L-lysine.. The protein operates within protein degradation; proteasomal Pup-dependent pathway. Its pathway is protein modification; protein pupylation. Functionally, catalyzes the covalent attachment of the prokaryotic ubiquitin-like protein modifier Pup to the proteasomal substrate proteins, thereby targeting them for proteasomal degradation. This tagging system is termed pupylation. The ligation reaction involves the side-chain carboxylate of the C-terminal glutamate of Pup and the side-chain amino group of a substrate lysine. In Bifidobacterium dentium (strain ATCC 27534 / DSM 20436 / JCM 1195 / Bd1), this protein is Pup--protein ligase.